The chain runs to 173 residues: Alpha-crystallin B chain (173 aa).

M1 is subject to N-acetylmethionine. The sHSP domain occupies 54-162 (RLPSWIESGL…PERSIPITRE (109 aa)). The Zn(2+) site is built by H81, H102, E104, and H109.

Belongs to the small heat shock protein (HSP20) family. As to quaternary structure, heteromer composed of three CRYAA and one CRYAB subunits. Aggregates with homologous proteins, including the small heat shock protein HSPB1, to form large heteromeric complexes. Inter-subunit bridging via zinc ions enhances stability, which is crucial as there is no protein turn over in the lens.

Functionally, may contribute to the transparency and refractive index of the lens. This is Alpha-crystallin B chain (CRYAB) from Aquarana catesbeiana (American bullfrog).